Reading from the N-terminus, the 194-residue chain is Phosphoheptose isomerase (194 aa).

Residues 31-186 enclose the SIS domain; sequence ICQRFQAGNK…CEQVESRLFA (156 aa). 46 to 48 provides a ligand contact to substrate; that stretch reads NGG. Zn(2+) is bound by residues H55 and E59. Residues E59, 88–89, 114–116, S119, and Q166 contribute to the substrate site; these read ND and STS. Q166 and H174 together coordinate Zn(2+).

It belongs to the SIS family. GmhA subfamily. It depends on Zn(2+) as a cofactor.

The protein localises to the cytoplasm. It carries out the reaction 2 D-sedoheptulose 7-phosphate = D-glycero-alpha-D-manno-heptose 7-phosphate + D-glycero-beta-D-manno-heptose 7-phosphate. The protein operates within carbohydrate biosynthesis; D-glycero-D-manno-heptose 7-phosphate biosynthesis; D-glycero-alpha-D-manno-heptose 7-phosphate and D-glycero-beta-D-manno-heptose 7-phosphate from sedoheptulose 7-phosphate: step 1/1. Functionally, catalyzes the isomerization of sedoheptulose 7-phosphate in D-glycero-D-manno-heptose 7-phosphate. The polypeptide is Phosphoheptose isomerase (Synechocystis sp. (strain ATCC 27184 / PCC 6803 / Kazusa)).